The sequence spans 646 residues: NADP-dependent malic enzyme 4, chloroplastic (646 aa).

A chloroplast-targeting transit peptide spans 1-74 (MISLTPSLFL…LETSAADIVP (74 aa)). Tyr194 functions as the Proton donor in the catalytic mechanism. Arg247 contributes to the NADP(+) binding site. Lys265 serves as the catalytic Proton acceptor. Residues Glu337, Asp338, and Asp361 each contribute to the a divalent metal cation site. Residues Asp361, 390–406 (LFLG…ELIA), and Asn502 each bind NADP(+).

It belongs to the malic enzymes family. Homodimer and homotetramer. The cofactor is Mg(2+). Mn(2+) is required as a cofactor. As to expression, expressed in leaves, stems, flowers and roots, mainly in vascular system. In roots, present in the stele, including the vascular tissue and the pericycle, mainly at emerging lateral roots and at root tips.

It is found in the plastid. The protein localises to the chloroplast. The enzyme catalyses (S)-malate + NADP(+) = pyruvate + CO2 + NADPH. It catalyses the reaction oxaloacetate + H(+) = pyruvate + CO2. The protein operates within photosynthesis; C3 acid pathway. Functionally, the chloroplastic ME isoform decarboxylates malate shuttled from neighboring mesophyll cells. The CO(2) released is then refixed by ribulose-bisphosphate carboxylase. This pathway eliminates the photorespiratory loss of CO(2) that occurs in most plants. The polypeptide is NADP-dependent malic enzyme 4, chloroplastic (NADP-ME4) (Arabidopsis thaliana (Mouse-ear cress)).